We begin with the raw amino-acid sequence, 186 residues long: Ribosome-recycling factor (186 aa).

Belongs to the RRF family.

The protein localises to the cytoplasm. In terms of biological role, responsible for the release of ribosomes from messenger RNA at the termination of protein biosynthesis. May increase the efficiency of translation by recycling ribosomes from one round of translation to another. The protein is Ribosome-recycling factor of Rickettsia conorii (strain ATCC VR-613 / Malish 7).